Consider the following 224-residue polypeptide: Response regulator protein GraR (224 aa).

Residues 2–115 (QILLVEDDNT…VLIAKLQAIY (114 aa)) form the Response regulatory domain. The residue at position 51 (aspartate 51) is a 4-aspartylphosphate. Residues 126–224 (KRTLTWQDAV…KVGKGYMAHE (99 aa)) constitute a DNA-binding region (ompR/PhoB-type). 3 positions are modified to phosphothreonine: threonine 128, threonine 130, and threonine 149.

Interacts with GraX. Post-translationally, phosphorylated by GraS. Phosphorylated by Stk1; phosphorylation increases the DNA-binding activity of GraR.

It localises to the cytoplasm. Functionally, member of the two-component regulatory system GraR/GraS involved in resistance against cationic antimicrobial peptides (CAMPs). Upon phosphorylation by GraS, functions as a transcription regulator by direct binding to promoter regions of target genes such as adhesins, exoproteins, transporters, toxins, and proteins involved in cell wall synthesis. Down-regulates the expression of many genes involved in RNA and amino acid synthesis or glycolysis. In Staphylococcus aureus (strain Mu3 / ATCC 700698), this protein is Response regulator protein GraR (graR).